We begin with the raw amino-acid sequence, 212 residues long: Large ribosomal subunit protein uL3 (212 aa).

The segment covering 136-155 (THGNSLSHRSNGSIGQNQTP) has biased composition (polar residues). The tract at residues 136–157 (THGNSLSHRSNGSIGQNQTPGR) is disordered. An N5-methylglutamine modification is found at Gln153.

This sequence belongs to the universal ribosomal protein uL3 family. Part of the 50S ribosomal subunit. Forms a cluster with proteins L14 and L19. In terms of processing, methylated by PrmB.

One of the primary rRNA binding proteins, it binds directly near the 3'-end of the 23S rRNA, where it nucleates assembly of the 50S subunit. In Shewanella putrefaciens (strain CN-32 / ATCC BAA-453), this protein is Large ribosomal subunit protein uL3.